Consider the following 250-residue polypeptide: GPI-anchored hemophore PGA10 (250 aa).

The first 20 residues, 1–20 (MMSFSLLSIVSIALAATVSA), serve as a signal peptide directing secretion. The CFEM domain occupies 26-137 (NAYTAYPSVA…DALAKAANAA (112 aa)). 4 cysteine pairs are disulfide-bonded: cysteine 54/cysteine 94, cysteine 58/cysteine 89, cysteine 68/cysteine 75, and cysteine 77/cysteine 110. Aspartate 72 serves as a coordination point for heme. Residues 165 to 219 (STSHESKVAETSVAQQTASTEKSSAAETSRAKETSKAEESSKAEETSVAQSSSSA) are disordered. A compositionally biased stretch (low complexity) spans 178–192 (AQQTASTEKSSAAET). Over residues 193-209 (SRAKETSKAEESSKAEE) the composition is skewed to basic and acidic residues. Over residues 210–219 (TSVAQSSSSA) the composition is skewed to low complexity. A lipid anchor (GPI-anchor amidated asparagine) is attached at asparagine 230. Positions 231–250 (AGNMPVIAIGGVIAAFAALI) are cleaved as a propeptide — removed in mature form.

The protein belongs to the RBT5 family. The GPI-anchor is attached to the protein in the endoplasmic reticulum and serves to target the protein to the cell surface. There, the glucosamine-inositol phospholipid moiety is cleaved off and the GPI-modified mannoprotein is covalently attached via its lipidless GPI glycan remnant to the 1,6-beta-glucan of the outer cell wall layer. In terms of processing, mannosylated.

The protein localises to the secreted. It is found in the cell wall. The protein resides in the cell membrane. Functionally, heme-binding protein involved in heme-iron utilization. The ability to acquire iron from host tissues is a major virulence factor of pathogenic microorganisms. Involved in biofilm formation. The chain is GPI-anchored hemophore PGA10 from Candida albicans (strain SC5314 / ATCC MYA-2876) (Yeast).